The primary structure comprises 358 residues: MRTPRFRVQAKNVFLTYPNCSIPKEHLLSFIQTLSLPSNPKFIKICRELHQNGEPHLHALIQFEGKITITNNRLFDCVHPSCSTNFHPNIQGAKSSSDVKSYLDKDGDTVEWGQFQIDGRSARGGQQSANDAYAKALNSGSKSEALNVIRELVPKDFVLQFHNLNSNLDRIFQEPPAPYVSPFPCSSFDQVPDELEEWVADNVRDSAARPWRPNSIVIEGDSRTGKTIWARSLGPHNYLCGHLDLSPKVFNNDAWYNVIDDVDPHYLKHFKEFMGSQRDWQSNTKYGKPVQIKGGIPTIFLCNPGPTSSYKEFLDEEKQEALKAWALKNAIFITLTEPLYSGSNQSQSQTIQEASHPA.

In terms of domain architecture, CRESS-DNA virus Rep endonuclease spans 7–115 (RVQAKNVFLT…DGDTVEWGQF (109 aa)). Residues 14–17 (FLTY) carry the RCR-1 motif. 3 residues coordinate a divalent metal cation: E48, H56, and H58. The short motif at 56–58 (HLH) is the RCR-2 element. Y102 (for DNA cleavage activity) is an active-site residue. The RCR-3 motif lies at 102–105 (YLDK). A divalent metal cation is bound at residue D106. Positions 142 to 152 (KSEALNVIREL) are binding to RBR1. The oligomerization stretch occupies residues 155 to 175 (KDFVLQFHNLNSNLDRIFQEP). 220–227 (GDSRTGKT) provides a ligand contact to ATP.

This sequence belongs to the geminiviridae Rep protein family. As to quaternary structure, homooligomer. Interacts with the replication enhancer protein (REn). Interacts with host retinoblastoma-related protein 1 (RBR1), and may thereby induce the transcription of host replicative enzymes even if the cell is not dividing anymore. Interacts with host PCNA. Interacts with host SCE1 protein. Mg(2+) serves as cofactor. Requires Mn(2+) as cofactor.

It is found in the host nucleus. Functionally, essential for the replication of viral ssDNA. The closed circular ssDNA genome is first converted to a superhelical dsDNA. Rep binds a specific region at the genome origin of replication. It introduces an endonucleolytic nick within the conserved sequence 5'-TAATATTAC-3' in the intergenic region of the genome present in all geminiviruses, thereby initiating the rolling circle replication (RCR). Following cleavage, binds covalently to the 5'-phosphate of DNA as a tyrosyl ester. The cleavage gives rise to a free 3'-OH that serves as a primer for the cellular DNA polymerase. The polymerase synthesizes the (+) strand DNA by rolling circle mechanism. After one round of replication, a Rep-catalyzed nucleotidyl transfer reaction releases a circular single-stranded virus genome, thereby terminating the replication. Displays origin-specific DNA cleavage, nucleotidyl transferase, ATPase and helicase activities. The protein is Replication-associated protein of Hewittia sublobata (Coralbush).